Reading from the N-terminus, the 1017-residue chain is Dopamine dehydroxylase (1017 aa).

The tat-type signal signal peptide spans 1-34 (MGNLTMSRRTFVKTAAITGAAAAAFGASTHTALA). Residues 45-103 (DTVAVKTCCRGCGKMECGVKVIVQNGRAIRVEGDEGAFQSMGNCCTKSQSSIQAAYHPD) form the 4Fe-4S Mo/W bis-MGD-type domain. [4Fe-4S] cluster contacts are provided by Cys-53, Cys-56, Cys-61, and Cys-89. Lys-91 acts as the Electron donor/acceptor in catalysis.

This sequence belongs to the prokaryotic molybdopterin-containing oxidoreductase family. It depends on [4Fe-4S] cluster as a cofactor. Mo-bis(molybdopterin guanine dinucleotide) serves as cofactor. In terms of processing, predicted to be exported by the Tat system. The position of the signal peptide cleavage has not been experimentally proven.

It catalyses the reaction dopamine + AH2 = 3-tyramine + A + H2O. Its function is as follows. Involved in drug metabolism, as part of an interspecies gut bacterial pathway for Levodopa (L-dopa) metabolism, acting on dopamine produced by Enterecoccus L-dopa decarboxylase. Removes the para hydroxyl group of dopamine to produce m-tyramine (3-tyramine). It is possible that dopamine dehydroxylation influences the multiple side effects of L-dopa administration linked to dopamine production in the treatment of Parkinson's disease. The sequence is that of Dopamine dehydroxylase from Eggerthella lenta (Eubacterium lentum).